The primary structure comprises 3174 residues: Probable polyketide synthase 15 (3174 aa).

The Ketosynthase family 3 (KS3) domain occupies 23 to 474; it reads NDEIAIVGIG…GSNCCLILSQ (452 aa). Active-site for beta-ketoacyl synthase activity residues include cysteine 194, histidine 342, and histidine 397. Coiled coils occupy residues 472-509 and 574-604; these read LSQF…QYDN and EFNK…RVQT. Residues 578 to 599 are compositionally biased toward basic and acidic residues; sequence QKQSQKEKEKEKEREGEEKEQL. A disordered region spans residues 578–601; sequence QKQSQKEKEKEKEREGEEKEQLNR. Residues 707-740 form an acyl/malonyl transferase region; it reads GIEASFIVGHSLGEIPAAYCSGMITLDTLCYLIY. The active-site For acyl/malonyl transferase activity is serine 717. The tract at residues 1034–1156 is N-terminal hotdog fold; it reads IDILGLSNYD…ANFQLLNNNN (123 aa). In terms of domain architecture, PKS/mFAS DH spans 1034–1332; the sequence is IDILGLSNYD…CKSLKIVKNP (299 aa). Residue histidine 1068 is the Proton acceptor; for dehydratase activity of the active site. Residues 1182–1332 are C-terminal hotdog fold; it reads NKTKISRIDL…CKSLKIVKNP (151 aa). Aspartate 1241 acts as the Proton donor; for dehydratase activity in catalysis. A coiled-coil region spans residues 1758-1793; the sequence is LEININNNNNNNNNNNNNNNNNNNNNNNNNNYEDNV. The region spanning 2653–2730 is the Carrier domain; that stretch reads VDSLNIKDIF…LVIKIIITAI (78 aa). Serine 2690 is subject to O-(pantetheine 4'-phosphoryl)serine.

The cofactor is pantetheine 4'-phosphate.

Its function is as follows. Probable polyketide synthase. The polypeptide is Probable polyketide synthase 15 (pks15) (Dictyostelium discoideum (Social amoeba)).